Here is a 193-residue protein sequence, read N- to C-terminus: Molybdenum cofactor guanylyltransferase (193 aa).

GTP-binding positions include 8-10, Lys-21, Asp-67, and Asp-98; that span reads LAG. Asp-98 is a Mg(2+) binding site.

The protein belongs to the MobA family. Monomer. The cofactor is Mg(2+).

The protein localises to the cytoplasm. It carries out the reaction Mo-molybdopterin + GTP + H(+) = Mo-molybdopterin guanine dinucleotide + diphosphate. Transfers a GMP moiety from GTP to Mo-molybdopterin (Mo-MPT) cofactor (Moco or molybdenum cofactor) to form Mo-molybdopterin guanine dinucleotide (Mo-MGD) cofactor. The chain is Molybdenum cofactor guanylyltransferase from Cereibacter sphaeroides (strain ATCC 17023 / DSM 158 / JCM 6121 / CCUG 31486 / LMG 2827 / NBRC 12203 / NCIMB 8253 / ATH 2.4.1.) (Rhodobacter sphaeroides).